The chain runs to 166 residues: Spiderine-1a (166 aa).

A signal peptide spans 1-18; the sequence is MKFALVLLGVCAFYLVNA. A propeptide spanning residues 19–58 is cleaved from the precursor; that stretch reads TGDLETELEASELQELQEALDLIGETPLESLEAEELEEAR. The interval 59–99 is linear cationic cytotoxin domain; that stretch reads KFKWGKLFSTAKKLYKKGKKLSKNKNFKKALKFGKQLAKNL. The region spanning 113–166 is the Oxytoxin-type inhibitor cystine knot (ICK) domain; it reads NNKCWAIGTTCSDDCDCCPEHHCHCPAGKWLPGLFRCTCQVTESDKVNKCPPAE. Intrachain disulfides connect cysteine 116/cysteine 130, cysteine 123/cysteine 135, cysteine 127/cysteine 162, cysteine 129/cysteine 151, and cysteine 137/cysteine 149.

The protein belongs to the spiderine family. Cationic/spiderine subfamily. As to expression, expressed by the venom gland.

The protein resides in the secreted. Functionally, has antimicrobial, insecticidal, cytolytic and cytotoxic activity. Active against E.coli DH5alpha, E.faecalis VKM B 871, B.subtilis VKM B 501, A.globiformis VKM Ac 1112, P.aeruginosa PAO1 and S.aureus 209P in submicromolar or low micromolar ranges. Lyses human erythrocytes. Kills HeLA and A549 cells. The polypeptide is Spiderine-1a (Oxyopes takobius (Lynx spider)).